The sequence spans 359 residues: MSPDAIKLLKEKVFDKSKWMQLPRDVVIGHDVLGQIAPVCEDLKLGRSALLISGKNTMDRAGKTVQDVIGKTCDVMVYISDEISPAVIKDAEKAAKDVDFVIGVGGGRVIDTAKIVSYNLDRQFVSVPTAASHDGIASARASVPTGEGNVSLEAHPPIAIIADTCIIASAPHRLLAAGCADVISNYTAILDWEMAHRIKGEPMSEYAVALSKMTAEILVKNADLIRPNQEQSAWFVTKALVSSGVAMSIAGSSRPASGGEHKFSHALDRLAPNKALHGESCGIGTIISMYLHGGDWRGIRQSLRTIGAPVTPTDVGIADEIAVEALLMAKTIRPERFTIFDMGITRDSAEKLIQMLYAD.

NAD(+)-binding positions include 107 to 111 (GRVID) and 129 to 132 (TAAS). Position 134 (D134) interacts with substrate. S138 is an NAD(+) binding site. D181 contributes to the substrate binding site. Positions 181 and 261 each coordinate Zn(2+). Substrate is bound at residue H265. H277 provides a ligand contact to Zn(2+).

It belongs to the glycerol-1-phosphate dehydrogenase family. Zn(2+) is required as a cofactor.

The protein localises to the cytoplasm. It carries out the reaction sn-glycerol 1-phosphate + NAD(+) = dihydroxyacetone phosphate + NADH + H(+). The enzyme catalyses sn-glycerol 1-phosphate + NADP(+) = dihydroxyacetone phosphate + NADPH + H(+). The protein operates within membrane lipid metabolism; glycerophospholipid metabolism. Functionally, catalyzes the NAD(P)H-dependent reduction of dihydroxyacetonephosphate (DHAP or glycerone phosphate) to glycerol 1-phosphate (G1P). The G1P thus generated is used as the glycerophosphate backbone of phospholipids in the cellular membranes of Archaea. In Methanoregula boonei (strain DSM 21154 / JCM 14090 / 6A8), this protein is Glycerol-1-phosphate dehydrogenase [NAD(P)+].